A 211-amino-acid polypeptide reads, in one-letter code: Thiamine-phosphate synthase (211 aa).

Residues 37–41 (QLRIK) and asparagine 69 each bind 4-amino-2-methyl-5-(diphosphooxymethyl)pyrimidine. Residues aspartate 70 and aspartate 89 each contribute to the Mg(2+) site. Serine 108 is a binding site for 4-amino-2-methyl-5-(diphosphooxymethyl)pyrimidine. 134-136 (TQT) contributes to the 2-[(2R,5Z)-2-carboxy-4-methylthiazol-5(2H)-ylidene]ethyl phosphate binding site. 4-amino-2-methyl-5-(diphosphooxymethyl)pyrimidine is bound at residue lysine 137. Residues glycine 166 and 186–187 (VS) contribute to the 2-[(2R,5Z)-2-carboxy-4-methylthiazol-5(2H)-ylidene]ethyl phosphate site.

This sequence belongs to the thiamine-phosphate synthase family. Requires Mg(2+) as cofactor.

The enzyme catalyses 2-[(2R,5Z)-2-carboxy-4-methylthiazol-5(2H)-ylidene]ethyl phosphate + 4-amino-2-methyl-5-(diphosphooxymethyl)pyrimidine + 2 H(+) = thiamine phosphate + CO2 + diphosphate. It catalyses the reaction 2-(2-carboxy-4-methylthiazol-5-yl)ethyl phosphate + 4-amino-2-methyl-5-(diphosphooxymethyl)pyrimidine + 2 H(+) = thiamine phosphate + CO2 + diphosphate. The catalysed reaction is 4-methyl-5-(2-phosphooxyethyl)-thiazole + 4-amino-2-methyl-5-(diphosphooxymethyl)pyrimidine + H(+) = thiamine phosphate + diphosphate. It participates in cofactor biosynthesis; thiamine diphosphate biosynthesis; thiamine phosphate from 4-amino-2-methyl-5-diphosphomethylpyrimidine and 4-methyl-5-(2-phosphoethyl)-thiazole: step 1/1. Functionally, condenses 4-methyl-5-(beta-hydroxyethyl)thiazole monophosphate (THZ-P) and 2-methyl-4-amino-5-hydroxymethyl pyrimidine pyrophosphate (HMP-PP) to form thiamine monophosphate (TMP). This is Thiamine-phosphate synthase from Escherichia coli O157:H7.